The chain runs to 255 residues: Proteasome subunit alpha (255 aa).

A compositionally biased stretch (polar residues) spans 190 to 201 (PSTSGASGNGET). Positions 190–255 (PSTSGASGNG…DKSSGDGEQN (66 aa)) are disordered. The segment covering 202 to 217 (EPSKLEVAILDRERPG) has biased composition (basic and acidic residues).

The protein belongs to the peptidase T1A family. As to quaternary structure, the 20S proteasome core is composed of 14 alpha and 14 beta subunits that assemble into four stacked heptameric rings, resulting in a barrel-shaped structure. The two inner rings, each composed of seven catalytic beta subunits, are sandwiched by two outer rings, each composed of seven alpha subunits. The catalytic chamber with the active sites is on the inside of the barrel. Has a gated structure, the ends of the cylinder being occluded by the N-termini of the alpha-subunits. Is capped by the proteasome-associated ATPase, ARC.

It localises to the cytoplasm. It functions in the pathway protein degradation; proteasomal Pup-dependent pathway. The formation of the proteasomal ATPase ARC-20S proteasome complex, likely via the docking of the C-termini of ARC into the intersubunit pockets in the alpha-rings, may trigger opening of the gate for substrate entry. Interconversion between the open-gate and close-gate conformations leads to a dynamic regulation of the 20S proteasome proteolysis activity. Functionally, component of the proteasome core, a large protease complex with broad specificity involved in protein degradation. The polypeptide is Proteasome subunit alpha (Saccharomonospora viridis (strain ATCC 15386 / DSM 43017 / JCM 3036 / CCUG 5913 / NBRC 12207 / NCIMB 9602 / P101) (Thermoactinomyces viridis)).